The sequence spans 165 residues: 6,7-dimethyl-8-ribityllumazine synthase (165 aa).

Residues Trp26, 58-60 (SIE), and 80-82 (VVI) each bind 5-amino-6-(D-ribitylamino)uracil. Residue 85 to 86 (GT) coordinates (2S)-2-hydroxy-3-oxobutyl phosphate. His88 (proton donor) is an active-site residue. Residue Asn113 participates in 5-amino-6-(D-ribitylamino)uracil binding. Residue Arg127 coordinates (2S)-2-hydroxy-3-oxobutyl phosphate.

It belongs to the DMRL synthase family.

The enzyme catalyses (2S)-2-hydroxy-3-oxobutyl phosphate + 5-amino-6-(D-ribitylamino)uracil = 6,7-dimethyl-8-(1-D-ribityl)lumazine + phosphate + 2 H2O + H(+). It functions in the pathway cofactor biosynthesis; riboflavin biosynthesis; riboflavin from 2-hydroxy-3-oxobutyl phosphate and 5-amino-6-(D-ribitylamino)uracil: step 1/2. Its function is as follows. Catalyzes the formation of 6,7-dimethyl-8-ribityllumazine by condensation of 5-amino-6-(D-ribitylamino)uracil with 3,4-dihydroxy-2-butanone 4-phosphate. This is the penultimate step in the biosynthesis of riboflavin. This Saccharopolyspora erythraea (strain ATCC 11635 / DSM 40517 / JCM 4748 / NBRC 13426 / NCIMB 8594 / NRRL 2338) protein is 6,7-dimethyl-8-ribityllumazine synthase.